Consider the following 118-residue polypeptide: Basic phospholipase A2 PA-12A (118 aa).

7 disulfides stabilise this stretch: Cys11-Cys71, Cys27-Cys117, Cys29-Cys45, Cys44-Cys98, Cys51-Cys91, Cys60-Cys84, and Cys78-Cys89. Residues Tyr28, Gly30, and Gly32 each coordinate Ca(2+). His48 is a catalytic residue. Residue Asp49 coordinates Ca(2+). Asp92 is an active-site residue.

It belongs to the phospholipase A2 family. Group I subfamily. D49 sub-subfamily. The cofactor is Ca(2+). Expressed by the venom gland.

The protein localises to the secreted. The enzyme catalyses a 1,2-diacyl-sn-glycero-3-phosphocholine + H2O = a 1-acyl-sn-glycero-3-phosphocholine + a fatty acid + H(+). PLA2 catalyzes the calcium-dependent hydrolysis of the 2-acyl groups in 3-sn-phosphoglycerides. The sequence is that of Basic phospholipase A2 PA-12A from Pseudechis australis (Mulga snake).